A 200-amino-acid chain; its full sequence is MTDIAASASQPALVRNELNLVWLDMEMTGLDPDNDRIIEIAVVVTNSTLDIAVEGPVFAIHQSDETLAKMDDWNKSTHGRSGLIDRVRASTVTEAQAAAQLQAFLADYVSPGKSPMCGNSICQDRRFMARWMPEFERFFHYRNLDVSTLKELCRRWQPAIYKGFQKRAMHTALADIHESIDELKYYREHFLIPAAPASAA.

Residues L20–L183 enclose the Exonuclease domain. Residue Y141 is part of the active site.

Belongs to the oligoribonuclease family.

The protein resides in the cytoplasm. In terms of biological role, 3'-to-5' exoribonuclease specific for small oligoribonucleotides. The sequence is that of Oligoribonuclease from Burkholderia vietnamiensis (strain G4 / LMG 22486) (Burkholderia cepacia (strain R1808)).